The primary structure comprises 262 residues: Hydroxyethylthiazole kinase (262 aa).

Met-50 lines the substrate pocket. Arg-125 and Thr-171 together coordinate ATP. Gly-198 contributes to the substrate binding site.

This sequence belongs to the Thz kinase family. Mg(2+) is required as a cofactor.

It carries out the reaction 5-(2-hydroxyethyl)-4-methylthiazole + ATP = 4-methyl-5-(2-phosphooxyethyl)-thiazole + ADP + H(+). It functions in the pathway cofactor biosynthesis; thiamine diphosphate biosynthesis; 4-methyl-5-(2-phosphoethyl)-thiazole from 5-(2-hydroxyethyl)-4-methylthiazole: step 1/1. Catalyzes the phosphorylation of the hydroxyl group of 4-methyl-5-beta-hydroxyethylthiazole (THZ). This chain is Hydroxyethylthiazole kinase, found in Escherichia coli O81 (strain ED1a).